The sequence spans 354 residues: UDP-N-acetylglucosamine--N-acetylmuramyl-(pentapeptide) pyrophosphoryl-undecaprenol N-acetylglucosamine transferase (354 aa).

Residues 13 to 15, N125, R161, S189, I242, 261 to 266, and Q286 contribute to the UDP-N-acetyl-alpha-D-glucosamine site; these read SGG and ALTVSE.

Belongs to the glycosyltransferase 28 family. MurG subfamily.

Its subcellular location is the cell inner membrane. It carries out the reaction di-trans,octa-cis-undecaprenyl diphospho-N-acetyl-alpha-D-muramoyl-L-alanyl-D-glutamyl-meso-2,6-diaminopimeloyl-D-alanyl-D-alanine + UDP-N-acetyl-alpha-D-glucosamine = di-trans,octa-cis-undecaprenyl diphospho-[N-acetyl-alpha-D-glucosaminyl-(1-&gt;4)]-N-acetyl-alpha-D-muramoyl-L-alanyl-D-glutamyl-meso-2,6-diaminopimeloyl-D-alanyl-D-alanine + UDP + H(+). The protein operates within cell wall biogenesis; peptidoglycan biosynthesis. Cell wall formation. Catalyzes the transfer of a GlcNAc subunit on undecaprenyl-pyrophosphoryl-MurNAc-pentapeptide (lipid intermediate I) to form undecaprenyl-pyrophosphoryl-MurNAc-(pentapeptide)GlcNAc (lipid intermediate II). This Buchnera aphidicola subsp. Schizaphis graminum (strain Sg) protein is UDP-N-acetylglucosamine--N-acetylmuramyl-(pentapeptide) pyrophosphoryl-undecaprenol N-acetylglucosamine transferase.